The chain runs to 373 residues: Mannan endo-1,4-beta-mannosidase A (373 aa).

Positions 1–17 are cleaved as a signal peptide; sequence MKGLFAFGLGLLSLVNA. Residues Trp-81, Asn-193, and 194–196 contribute to the substrate site; that span reads EPR. Glu-194 (proton donor/acceptor) is an active-site residue. An intrachain disulfide couples Cys-197 to Cys-200. Substrate contacts are provided by Glu-230, Tyr-267, and Trp-271. An intrachain disulfide couples Cys-289 to Cys-296. Catalysis depends on Glu-300, which acts as the Nucleophile. Cys-308 and Cys-359 are disulfide-bonded. Substrate is bound at residue Trp-332.

This sequence belongs to the glycosyl hydrolase 5 (cellulase A) family. Monomer. Post-translationally, not glycosylated.

It localises to the secreted. The enzyme catalyses Random hydrolysis of (1-&gt;4)-beta-D-mannosidic linkages in mannans, galactomannans and glucomannans.. Its function is as follows. Endo-1,4-mannanase that catalyzes the random hydrolysis of (1-&gt;4)-beta-D-mannosidic linkages in mannans and heteromannans. It is a crucial enzyme for depolymerization of seed galactomannans and wood galactoglucomannans. Hydrolyzes structurally different mannan polysaccharides, such as galactomannans, glucomannans, and beta-1,4-mannans from different sources, yielding principally mannobiose. Also has transglycosylation activity. This Podospora anserina (strain S / ATCC MYA-4624 / DSM 980 / FGSC 10383) (Pleurage anserina) protein is Mannan endo-1,4-beta-mannosidase A.